A 154-amino-acid chain; its full sequence is Ribonuclease H (154 aa).

The RNase H type-1 domain occupies 1 to 142 (MTKQVEIFTD…CDELARQGAN (142 aa)). Mg(2+) is bound by residues D10, E48, D70, and D134.

The protein belongs to the RNase H family. Monomer. It depends on Mg(2+) as a cofactor.

The protein resides in the cytoplasm. The catalysed reaction is Endonucleolytic cleavage to 5'-phosphomonoester.. Endonuclease that specifically degrades the RNA of RNA-DNA hybrids. The polypeptide is Ribonuclease H (Yersinia pestis bv. Antiqua (strain Antiqua)).